The chain runs to 265 residues: Shikimate dehydrogenase (NADP(+)) (265 aa).

Residues 15-17 and threonine 62 contribute to the shikimate site; that span reads SLS. Residue lysine 66 is the Proton acceptor of the active site. Residue glutamate 78 coordinates NADP(+). Shikimate-binding residues include asparagine 87 and aspartate 102. NADP(+) is bound by residues 126–130, 150–155, and valine 210; these read GAGGV and NRTELK. Tyrosine 212 contacts shikimate. Glycine 233 contacts NADP(+).

It belongs to the shikimate dehydrogenase family. Homodimer.

The catalysed reaction is shikimate + NADP(+) = 3-dehydroshikimate + NADPH + H(+). It functions in the pathway metabolic intermediate biosynthesis; chorismate biosynthesis; chorismate from D-erythrose 4-phosphate and phosphoenolpyruvate: step 4/7. Functionally, involved in the biosynthesis of the chorismate, which leads to the biosynthesis of aromatic amino acids. Catalyzes the reversible NADPH linked reduction of 3-dehydroshikimate (DHSA) to yield shikimate (SA). The polypeptide is Shikimate dehydrogenase (NADP(+)) (Pelagibacter ubique (strain HTCC1062)).